The primary structure comprises 203 residues: ATP-dependent Clp protease proteolytic subunit 1 (203 aa).

The active-site Nucleophile is the serine 103. Histidine 128 is an active-site residue.

This sequence belongs to the peptidase S14 family. Fourteen ClpP subunits assemble into 2 heptameric rings which stack back to back to give a disk-like structure with a central cavity, resembling the structure of eukaryotic proteasomes.

It is found in the cytoplasm. It catalyses the reaction Hydrolysis of proteins to small peptides in the presence of ATP and magnesium. alpha-casein is the usual test substrate. In the absence of ATP, only oligopeptides shorter than five residues are hydrolyzed (such as succinyl-Leu-Tyr-|-NHMec, and Leu-Tyr-Leu-|-Tyr-Trp, in which cleavage of the -Tyr-|-Leu- and -Tyr-|-Trp bonds also occurs).. In terms of biological role, cleaves peptides in various proteins in a process that requires ATP hydrolysis. Has a chymotrypsin-like activity. Plays a major role in the degradation of misfolded proteins. This Treponema pallidum (strain Nichols) protein is ATP-dependent Clp protease proteolytic subunit 1.